Here is a 598-residue protein sequence, read N- to C-terminus: Arylsulfate sulfotransferase AssT (598 aa).

A signal peptide spans 1–27; that stretch reads MFHPYRKTLLSGTVALALGLFATGAIA. Residues His279 and His383 each coordinate 4-methylumbelliferone. Cys445 and Cys451 are oxidised to a cystine. Residue His463 participates in 4-methylumbelliferone binding. The active-site Nucleophile; sulfurylated histidine covalent intermediate is His463.

This sequence belongs to the aryl sulfotransferase family. Monomer.

The protein resides in the periplasm. It catalyses the reaction an aryl sulfate + a phenol = an aryl sulfate + a phenol. It carries out the reaction 4-methylumbelliferone sulfate + phenol = phenyl sulfate + 4-methylumbelliferone. The catalysed reaction is 2-naphthyl sulfate + phenol = phenyl sulfate + 2-naphthol. Catalyzes the transfer of a sulfate group from a phenyl sulfate ester to other phenolic compounds. Is able to use several substrate donors and acceptors in vitro: using phenol as an acceptor substrate, 4-methylumbelliferyl sulfate is the best donor substrate, followed by beta-naphthyl sulfate, p-nitrophenyl sulfate (PNS), and alpha-naphthyl sulfate; using PNS as a donor substrate, alpha-naphthol is the best acceptor substrate, followed by phenol, resorcinol, p-acetaminophen, tyramine, and tyrosine. Cannot use 3'-phosphoadenosine-5'-phophosulfate (PAPS), the donor substrate of mammalian sulfotransferase. May be a detoxifying enzyme, converting toxic phenolic compounds into non-toxic materials. This chain is Arylsulfate sulfotransferase AssT, found in Lelliottia amnigena (Enterobacter amnigenus).